A 134-amino-acid polypeptide reads, in one-letter code: MVVAPYLAVAIGGSLGAMSRYLVTIMAQNAWGIKFPYGTLLVNTLGSFLAGFFLIVLVGRFSAEESFRLFLFTGFLGAFTTFSSFAAESLFMFEQGYWFKLMTNILVNNVGSLSMVFIGTLVAKYVLLGHQGSN.

4 helical membrane passes run 7–27 (LAVA…TIMA), 38–58 (GTLL…IVLV), 69–89 (LFLF…AAES), and 110–130 (VGSL…LLGH). 2 residues coordinate Na(+): G77 and T80.

This sequence belongs to the fluoride channel Fluc/FEX (TC 1.A.43) family.

The protein localises to the cell inner membrane. It catalyses the reaction fluoride(in) = fluoride(out). Its activity is regulated as follows. Na(+) is not transported, but it plays an essential structural role and its presence is essential for fluoride channel function. Fluoride-specific ion channel. Important for reducing fluoride concentration in the cell, thus reducing its toxicity. This chain is Fluoride-specific ion channel FluC, found in Legionella pneumophila subsp. pneumophila (strain Philadelphia 1 / ATCC 33152 / DSM 7513).